Reading from the N-terminus, the 120-residue chain is Large ribosomal subunit protein uL29 (120 aa).

It belongs to the universal ribosomal protein uL29 family. Component of the large ribosomal subunit. Mature ribosomes consist of a small (40S) and a large (60S) subunit. The 40S subunit contains about 32 different proteins and 1 molecule of RNA (18S). The 60S subunit contains 45 different proteins and 3 molecules of RNA (25S, 5.8S and 5S).

Its subcellular location is the cytoplasm. Its function is as follows. Component of the ribosome, a large ribonucleoprotein complex responsible for the synthesis of proteins in the cell. The small ribosomal subunit (SSU) binds messenger RNAs (mRNAs) and translates the encoded message by selecting cognate aminoacyl-transfer RNA (tRNA) molecules. The large subunit (LSU) contains the ribosomal catalytic site termed the peptidyl transferase center (PTC), which catalyzes the formation of peptide bonds, thereby polymerizing the amino acids delivered by tRNAs into a polypeptide chain. The nascent polypeptides leave the ribosome through a tunnel in the LSU and interact with protein factors that function in enzymatic processing, targeting, and the membrane insertion of nascent chains at the exit of the ribosomal tunnel. This Candida albicans (strain SC5314 / ATCC MYA-2876) (Yeast) protein is Large ribosomal subunit protein uL29.